Consider the following 226-residue polypeptide: Brachyurin (226 aa).

The region spanning 1-223 (IVGGVEAVPN…FLDWIQTQTG (223 aa)) is the Peptidase S1 domain. Cys-26 and Cys-42 form a disulfide bridge. Residues His-41 and Asp-87 each act as charge relay system in the active site. 2 cysteine pairs are disulfide-bonded: Cys-151/Cys-164 and Cys-174/Cys-200. Ser-178 (charge relay system) is an active-site residue.

Belongs to the peptidase S1 family.

It carries out the reaction Hydrolysis of proteins, with broad specificity for peptide bonds. Native collagen is cleaved about 75% of the length of the molecule from the N-terminus. Low activity on small molecule substrates of both trypsin and chymotrypsin.. Functionally, this enzyme is a serine protease capable of degrading the native triple helix of collagen. This Leptuca pugilator (Atlantic sand fiddler crab) protein is Brachyurin.